A 265-amino-acid chain; its full sequence is uncharacterized protein (265 aa).

2 disordered regions span residues 162-183 and 196-239; these read VTKK…NNDQ and AKTN…DKEI. Composition is skewed to polar residues over residues 165–183 and 213–233; these read KNAS…NNDQ and QSTS…GNAS.

It belongs to the MG185/MG260 family.

This is an uncharacterized protein from Mycoplasma pneumoniae (strain ATCC 29342 / M129 / Subtype 1) (Mycoplasmoides pneumoniae).